A 346-amino-acid polypeptide reads, in one-letter code: mRNA endoribonuclease LsoA (346 aa).

Can form a complex with cognate antitoxin LsoB and with enterobacteria phage T4 antitoxin Dmd.

In terms of biological role, toxic component of a type II toxin-antitoxin (TA) system. A stable (half-life over 20 minutes) endoribonuclease that degrades mRNA. Degradation may be translation-stimulated. Overexpression in the absence of cognate antitoxin LsoB causes retarded growth and mRNA degradation, this effect is mitigated upon coexpression with antitoxin LsoB or enterobacteria phage T4 Dmd. Degrades late enterobacteria phage T4 mRNAs, protecting the host against T4 reproduction. The chain is mRNA endoribonuclease LsoA (lsoA) from Escherichia coli O157:H7.